A 421-amino-acid chain; its full sequence is Putative leucine-rich repeat protein R380 (421 aa).

7 LRR repeats span residues 48–69 (YLEK…QYLP), 70–85 (KIKE…THIP), 89–110 (NLIK…NQSK), 111–129 (LLYL…IFLP), 130–150 (ECRE…NYFP), 151–172 (NLRI…SSLI), and 173–191 (ELNI…PQLV).

The chain is Putative leucine-rich repeat protein R380 from Acanthamoeba polyphaga (Amoeba).